Here is a 179-residue protein sequence, read N- to C-terminus: ATP synthase subunit delta (179 aa).

It belongs to the ATPase delta chain family. As to quaternary structure, F-type ATPases have 2 components, F(1) - the catalytic core - and F(0) - the membrane proton channel. F(1) has five subunits: alpha(3), beta(3), gamma(1), delta(1), epsilon(1). F(0) has three main subunits: a(1), b(2) and c(10-14). The alpha and beta chains form an alternating ring which encloses part of the gamma chain. F(1) is attached to F(0) by a central stalk formed by the gamma and epsilon chains, while a peripheral stalk is formed by the delta and b chains.

Its subcellular location is the cell membrane. In terms of biological role, f(1)F(0) ATP synthase produces ATP from ADP in the presence of a proton or sodium gradient. F-type ATPases consist of two structural domains, F(1) containing the extramembraneous catalytic core and F(0) containing the membrane proton channel, linked together by a central stalk and a peripheral stalk. During catalysis, ATP synthesis in the catalytic domain of F(1) is coupled via a rotary mechanism of the central stalk subunits to proton translocation. Its function is as follows. This protein is part of the stalk that links CF(0) to CF(1). It either transmits conformational changes from CF(0) to CF(1) or is implicated in proton conduction. This is ATP synthase subunit delta from Clostridium botulinum (strain Okra / Type B1).